The following is a 519-amino-acid chain: 2-isopropylmalate synthase (519 aa).

The region spanning 12 to 274 (VVIFDTTLRD…WCNVESTMLT (263 aa)) is the Pyruvate carboxyltransferase domain. 4 residues coordinate Mn(2+): Asp-21, His-209, His-211, and Asn-245. The segment at 398 to 519 (KLSSLTVIAG…QRDVPAAAAS (122 aa)) is regulatory domain.

It belongs to the alpha-IPM synthase/homocitrate synthase family. LeuA type 1 subfamily. As to quaternary structure, homodimer. The cofactor is Mn(2+).

Its subcellular location is the cytoplasm. The catalysed reaction is 3-methyl-2-oxobutanoate + acetyl-CoA + H2O = (2S)-2-isopropylmalate + CoA + H(+). Its pathway is amino-acid biosynthesis; L-leucine biosynthesis; L-leucine from 3-methyl-2-oxobutanoate: step 1/4. Catalyzes the condensation of the acetyl group of acetyl-CoA with 3-methyl-2-oxobutanoate (2-ketoisovalerate) to form 3-carboxy-3-hydroxy-4-methylpentanoate (2-isopropylmalate). The protein is 2-isopropylmalate synthase of Nitrobacter winogradskyi (strain ATCC 25391 / DSM 10237 / CIP 104748 / NCIMB 11846 / Nb-255).